We begin with the raw amino-acid sequence, 341 residues long: Thiamine-phosphate synthase (341 aa).

Residues 1–123 form a unknown region; sequence MAVVEEQVVL…AAAAKEWRYR (123 aa). The tract at residues 61 to 80 is disordered; that stretch reads AARDTPHDPGTGLEHPDEGV. The thiamine-phosphate synthase stretch occupies residues 124 to 341; that stretch reads VYTLESTATG…AWFLERLNRG (218 aa). 4-amino-2-methyl-5-(diphosphooxymethyl)pyrimidine-binding positions include 171-175 and Asn203; that span reads QLREK. 2 residues coordinate Mg(2+): Asp204 and Asp223. Ser242 contacts 4-amino-2-methyl-5-(diphosphooxymethyl)pyrimidine. 268–270 is a 2-[(2R,5Z)-2-carboxy-4-methylthiazol-5(2H)-ylidene]ethyl phosphate binding site; sequence TPT. 4-amino-2-methyl-5-(diphosphooxymethyl)pyrimidine is bound at residue Lys271. 2-[(2R,5Z)-2-carboxy-4-methylthiazol-5(2H)-ylidene]ethyl phosphate is bound at residue Gly298.

It belongs to the thiamine-phosphate synthase family. The cofactor is Mg(2+).

It carries out the reaction 2-[(2R,5Z)-2-carboxy-4-methylthiazol-5(2H)-ylidene]ethyl phosphate + 4-amino-2-methyl-5-(diphosphooxymethyl)pyrimidine + 2 H(+) = thiamine phosphate + CO2 + diphosphate. The catalysed reaction is 2-(2-carboxy-4-methylthiazol-5-yl)ethyl phosphate + 4-amino-2-methyl-5-(diphosphooxymethyl)pyrimidine + 2 H(+) = thiamine phosphate + CO2 + diphosphate. It catalyses the reaction 4-methyl-5-(2-phosphooxyethyl)-thiazole + 4-amino-2-methyl-5-(diphosphooxymethyl)pyrimidine + H(+) = thiamine phosphate + diphosphate. It participates in cofactor biosynthesis; thiamine diphosphate biosynthesis; thiamine phosphate from 4-amino-2-methyl-5-diphosphomethylpyrimidine and 4-methyl-5-(2-phosphoethyl)-thiazole: step 1/1. Its function is as follows. Condenses 4-methyl-5-(beta-hydroxyethyl)thiazole monophosphate (THZ-P) and 2-methyl-4-amino-5-hydroxymethyl pyrimidine pyrophosphate (HMP-PP) to form thiamine monophosphate (TMP). The protein is Thiamine-phosphate synthase of Gloeobacter violaceus (strain ATCC 29082 / PCC 7421).